The following is a 280-amino-acid chain: UDP-2,3-diacylglucosamine pyrophosphatase LpxI (280 aa).

Residues A12, 74–75, Q169, 187–188, K214, and 226–233 each bind substrate; these read NV, TD, and LPTIGVAT.

Belongs to the LpxI family. In terms of assembly, homodimer. It depends on Mg(2+) as a cofactor.

The protein localises to the cell inner membrane. The catalysed reaction is UDP-2-N,3-O-bis[(3R)-3-hydroxytetradecanoyl]-alpha-D-glucosamine + H2O = 2-N,3-O-bis[(3R)-3-hydroxytetradecanoyl]-alpha-D-glucosaminyl 1-phosphate + UMP + 2 H(+). The protein operates within glycolipid biosynthesis; lipid IV(A) biosynthesis; lipid IV(A) from (3R)-3-hydroxytetradecanoyl-[acyl-carrier-protein] and UDP-N-acetyl-alpha-D-glucosamine: step 4/6. With respect to regulation, inhibited by high concentrations of Cu(2+) and Zn(2+). Completely inhibited by EDTA in vitro. Functionally, hydrolyzes the pyrophosphate bond of UDP-2,3-diacylglucosamine to form 2,3-diacylglucosamine 1-phosphate (lipid X) and UMP by catalyzing the attack of water at the beta-P atom. Involved in the biosynthesis of lipid A, a phosphorylated glycolipid that anchors the lipopolysaccharide to the outer membrane of the cell. Can functionally complement lpxH deficiency in E.coli. Cannot use CDP-diacylglycerol as substrate. This Caulobacter vibrioides (strain ATCC 19089 / CIP 103742 / CB 15) (Caulobacter crescentus) protein is UDP-2,3-diacylglucosamine pyrophosphatase LpxI.